We begin with the raw amino-acid sequence, 593 residues long: Elongation factor 4 (593 aa).

In terms of domain architecture, tr-type G spans 2–181; the sequence is DKIRNFCIIA…AVIERIPHPQ (180 aa). Residues 14 to 19 and 128 to 131 contribute to the GTP site; these read DHGKST and NKCD.

The protein belongs to the TRAFAC class translation factor GTPase superfamily. Classic translation factor GTPase family. LepA subfamily.

It localises to the cell inner membrane. It carries out the reaction GTP + H2O = GDP + phosphate + H(+). Its function is as follows. Required for accurate and efficient protein synthesis under certain stress conditions. May act as a fidelity factor of the translation reaction, by catalyzing a one-codon backward translocation of tRNAs on improperly translocated ribosomes. Back-translocation proceeds from a post-translocation (POST) complex to a pre-translocation (PRE) complex, thus giving elongation factor G a second chance to translocate the tRNAs correctly. Binds to ribosomes in a GTP-dependent manner. The chain is Elongation factor 4 from Bacteroides fragilis (strain ATCC 25285 / DSM 2151 / CCUG 4856 / JCM 11019 / LMG 10263 / NCTC 9343 / Onslow / VPI 2553 / EN-2).